The following is a 427-amino-acid chain: Serine--tRNA ligase (427 aa).

231-233 (TAE) is a binding site for L-serine. 262 to 264 (RSE) lines the ATP pocket. L-serine is bound at residue E285. 349–352 (EISS) lines the ATP pocket. S385 serves as a coordination point for L-serine.

It belongs to the class-II aminoacyl-tRNA synthetase family. Type-1 seryl-tRNA synthetase subfamily. As to quaternary structure, homodimer. The tRNA molecule binds across the dimer.

The protein resides in the cytoplasm. The catalysed reaction is tRNA(Ser) + L-serine + ATP = L-seryl-tRNA(Ser) + AMP + diphosphate + H(+). It carries out the reaction tRNA(Sec) + L-serine + ATP = L-seryl-tRNA(Sec) + AMP + diphosphate + H(+). Its pathway is aminoacyl-tRNA biosynthesis; selenocysteinyl-tRNA(Sec) biosynthesis; L-seryl-tRNA(Sec) from L-serine and tRNA(Sec): step 1/1. Functionally, catalyzes the attachment of serine to tRNA(Ser). Is also able to aminoacylate tRNA(Sec) with serine, to form the misacylated tRNA L-seryl-tRNA(Sec), which will be further converted into selenocysteinyl-tRNA(Sec). The protein is Serine--tRNA ligase of Methylococcus capsulatus (strain ATCC 33009 / NCIMB 11132 / Bath).